A 356-amino-acid polypeptide reads, in one-letter code: Peptide chain release factor 1 (356 aa).

An N5-methylglutamine modification is found at Q233.

It belongs to the prokaryotic/mitochondrial release factor family. Methylated by PrmC. Methylation increases the termination efficiency of RF1.

It is found in the cytoplasm. In terms of biological role, peptide chain release factor 1 directs the termination of translation in response to the peptide chain termination codons UAG and UAA. This Symbiobacterium thermophilum (strain DSM 24528 / JCM 14929 / IAM 14863 / T) protein is Peptide chain release factor 1.